A 589-amino-acid polypeptide reads, in one-letter code: Intermediate filament protein B (589 aa).

Residues 1–84 are head; that stretch reads SLKQSQESSE…LEATDKEKKE (84 aa). The IF rod domain maps to 81–433; sequence EKKEMQGLND…KMLEGEESRV (353 aa). A coil 1A region spans residues 85-116; the sequence is MQGLNDRLGNYIDRVKKLEEQNRKLVADLDEL. The interval 117–130 is linker 1; the sequence is RGRWGKDTSEIKIQ. Positions 131–268 are coil 1B; it reads YSDSLRDARK…RVHEQEVKEL (138 aa). The tract at residues 269 to 285 is linker 12; sequence QALLAQAPADTREFFKN. The segment at 286–433 is coil 2; that stretch reads ELALAIRDIK…KMLEGEESRV (148 aa). The tract at residues 434–589 is tail; that stretch reads GLRQMVEQVV…HTQKTIQTGQ (156 aa). The disordered stretch occupies residues 446–470; sequence HSLQQQEDTDSTRNVRGEVSTKTTF. One can recognise an LTD domain in the interval 466–584; it reads TKTTFQRSAK…DERATHTQKT (119 aa).

Belongs to the intermediate filament family. In terms of assembly, a and B can form homopolymers. Giant body muscle cells.

It localises to the cytoplasm. The protein is Intermediate filament protein B of Ascaris suum (Pig roundworm).